Consider the following 171-residue polypeptide: Disulfide bond formation protein B (171 aa).

The Cytoplasmic portion of the chain corresponds to 1-13 (MTFISNLADTRLA). Residues 14–30 (WGLLFLSALVLVAYALF) form a helical membrane-spanning segment. Topologically, residues 31-48 (SQHAMGLQPCIMCIYQRT) are periplasmic. Cys40 and Cys43 are joined by a disulfide. Residues 49 to 63 (AIFGIMFACVPVLAA) form a helical membrane-spanning segment. Over 64 to 70 (NNMLTRL) the chain is Cytoplasmic. The helical transmembrane segment at 71-88 (FAFTVWGISAIWGGLIAW) threads the bilayer. Topologically, residues 89–144 (EHYDIQNAANPFFATCEIVPNFPSWLPLHEWLPNLFAATGDCGNIDWVFMDMSMPQ) are periplasmic. An intrachain disulfide couples Cys104 to Cys130. Residues 145–163 (WMMVVFAIYSSIWFVVLAS) traverse the membrane as a helical segment. Residues 164–171 (RLIGNRAI) are Cytoplasmic-facing.

It belongs to the DsbB family.

It is found in the cell inner membrane. Functionally, required for disulfide bond formation in some periplasmic proteins. Acts by oxidizing the DsbA protein. The sequence is that of Disulfide bond formation protein B from Pseudoalteromonas atlantica (strain T6c / ATCC BAA-1087).